The sequence spans 339 residues: Ketol-acid reductoisomerase (NADP(+)) (339 aa).

In terms of domain architecture, KARI N-terminal Rossmann spans M1–T182. Residues Y24–Q27, R48, S51, T53, and D83–Q86 contribute to the NADP(+) site. The active site involves H108. G134 is a binding site for NADP(+). One can recognise a KARI C-terminal knotted domain in the interval T183–I328. D191, E195, E227, and E231 together coordinate Mg(2+). Residue S252 coordinates substrate.

This sequence belongs to the ketol-acid reductoisomerase family. Mg(2+) is required as a cofactor.

It carries out the reaction (2R)-2,3-dihydroxy-3-methylbutanoate + NADP(+) = (2S)-2-acetolactate + NADPH + H(+). It catalyses the reaction (2R,3R)-2,3-dihydroxy-3-methylpentanoate + NADP(+) = (S)-2-ethyl-2-hydroxy-3-oxobutanoate + NADPH + H(+). Its pathway is amino-acid biosynthesis; L-isoleucine biosynthesis; L-isoleucine from 2-oxobutanoate: step 2/4. It functions in the pathway amino-acid biosynthesis; L-valine biosynthesis; L-valine from pyruvate: step 2/4. In terms of biological role, involved in the biosynthesis of branched-chain amino acids (BCAA). Catalyzes an alkyl-migration followed by a ketol-acid reduction of (S)-2-acetolactate (S2AL) to yield (R)-2,3-dihydroxy-isovalerate. In the isomerase reaction, S2AL is rearranged via a Mg-dependent methyl migration to produce 3-hydroxy-3-methyl-2-ketobutyrate (HMKB). In the reductase reaction, this 2-ketoacid undergoes a metal-dependent reduction by NADPH to yield (R)-2,3-dihydroxy-isovalerate. This chain is Ketol-acid reductoisomerase (NADP(+)), found in Methylorubrum populi (strain ATCC BAA-705 / NCIMB 13946 / BJ001) (Methylobacterium populi).